The following is a 603-amino-acid chain: Zyxin (603 aa).

The segment covering 1-13 (MGPPPPPPPPPLL) has biased composition (pro residues). Disordered stretches follow at residues 1-131 (MGPP…HRDP), 166-193 (TQYANKSPSPPSFGNSNSEATYVSPYSS), 218-237 (ATTTTSSNSLNENNNSNKYG), 310-333 (RDEGLTESQKAANRNQTGALSASS), and 363-395 (LNQPADTSPSIVQYPRRQAPDSSRANYSATTST). Residues 69–95 (VRGDVENLSDGRLDRPHQQLPDGDRTY) show a composition bias toward basic and acidic residues. A compositionally biased stretch (polar residues) spans 184 to 193 (EATYVSPYSS). Over residues 218 to 234 (ATTTTSSNSLNENNNSN) the composition is skewed to low complexity. 3 stretches are compositionally biased toward polar residues: residues 315–333 (TESQKAANRNQTGALSASS), 363–373 (LNQPADTSPSI), and 382–391 (PDSSRANYSA). LIM zinc-binding domains lie at 409–470 (NICV…SLEK), 471–529 (CTAC…KFAP), and 530–601 (RCAL…RVVS).

Belongs to the zyxin/ajuba family. In terms of assembly, interacts with dyc-1. Interacts with glh-1 and glh-3. As to expression, expressed in neurons and body wall muscle. Expressed in pharyngeal, enteric and uterine muscles and in spermatheca.

It is found in the nucleus. It localises to the cytoplasm. The protein localises to the myofibril. Its subcellular location is the sarcomere. The protein resides in the m line. It is found in the cell projection. It localises to the axon. The protein localises to the cell junction. Its subcellular location is the focal adhesion. The protein resides in the cytoskeleton. Functionally, functions both as a mechanical stabilizer (via LIM domains) of focal adhesions, and as a sensor component for muscle cell damage (via N-terminus). Regulates, stabilizes and maintains posterior lateral mechanosensory (PLM) synaptic branch extension and new synapse formation and growth during larval development. This Caenorhabditis elegans protein is Zyxin.